An 842-amino-acid polypeptide reads, in one-letter code: Circularly permutated Ras protein 1 (842 aa).

Residues 62–66, 121–124, and 181–188 contribute to the GTP site; these read DTAGQ, NKVD, and GGGGVGKS. The interval 253–274 is disordered; that stretch reads SGKDKQPSPQQAASPSTIDRTG. A compositionally biased stretch (polar residues) spans 259-274; sequence PSPQQAASPSTIDRTG. Residues 377 to 627 form the VWFA domain; sequence IIIYCIDVSG…TQNPMIATDV (251 aa).

This sequence belongs to the small GTPase superfamily. CpRas family.

The chain is Circularly permutated Ras protein 1 (cpras1) from Dictyostelium discoideum (Social amoeba).